The following is a 362-amino-acid chain: Protein RecA (362 aa).

77-84 contacts ATP; sequence GPESSGKT.

The protein belongs to the RecA family.

The protein localises to the cytoplasm. In terms of biological role, can catalyze the hydrolysis of ATP in the presence of single-stranded DNA, the ATP-dependent uptake of single-stranded DNA by duplex DNA, and the ATP-dependent hybridization of homologous single-stranded DNAs. It interacts with LexA causing its activation and leading to its autocatalytic cleavage. This chain is Protein RecA, found in Rhizobium etli (strain CIAT 652).